We begin with the raw amino-acid sequence, 213 residues long: Glycerol-3-phosphate acyltransferase (213 aa).

The next 5 membrane-spanning stretches (helical) occupy residues 3–23, 68–88, 112–132, 134–154, and 163–183; these read LLLF…LWIG, ILLP…GFFA, VLLG…VLVL, LFSM…LSVL, and LPNY…IIII.

This sequence belongs to the PlsY family. As to quaternary structure, probably interacts with PlsX.

It localises to the cell membrane. The enzyme catalyses an acyl phosphate + sn-glycerol 3-phosphate = a 1-acyl-sn-glycero-3-phosphate + phosphate. Its pathway is lipid metabolism; phospholipid metabolism. In terms of biological role, catalyzes the transfer of an acyl group from acyl-phosphate (acyl-PO(4)) to glycerol-3-phosphate (G3P) to form lysophosphatidic acid (LPA). This enzyme utilizes acyl-phosphate as fatty acyl donor, but not acyl-CoA or acyl-ACP. The polypeptide is Glycerol-3-phosphate acyltransferase (Streptococcus pyogenes serotype M28 (strain MGAS6180)).